We begin with the raw amino-acid sequence, 1216 residues long: ATP-dependent DNA helicase Q4 (1216 aa).

Disordered regions lie at residues 72-100 and 113-171; these read EAQEPSCWGPHLSRAATQNTQSMPKQSLL and NLKN…PRLG. 2 stretches are compositionally biased toward polar residues: residues 86–100 and 114–137; these read AATQNTQSMPKQSLL and LKNTTQTGPTQSRKLQLQKRSLST. A phosphoserine mark is found at S179 and S181. The disordered stretch occupies residues 235-340; that stretch reads SEVSVQSPEA…LHASPRPASL (106 aa). 2 stretches are compositionally biased toward polar residues: residues 248 to 262 and 306 to 320; these read QPAQVLSQSPKSINS and TQVNVPQPCNSSNQA. The CCHC-type zinc-finger motif lies at 393-410; sequence DTCFRCGQFGHWASQCSQ. The segment at 436–458 is disordered; sequence AQRTGTASCHHSGEETQPAAPEL. Residues 506–684 form the Helicase ATP-binding domain; that stretch reads IMRILSGIST…AQHLGIAGEF (179 aa). 519 to 526 is a binding site for ATP; sequence LPTGAGKS. Positions 627–630 match the DEAH box motif; it reads DEVH. The 168-residue stretch at 705–872 folds into the Helicase C-terminal domain; the sequence is DSDQALVTLL…AVKRLVQRVF (168 aa). Zn(2+) contacts are provided by C875, C877, C906, and H909.

The protein belongs to the helicase family. RecQ subfamily. In terms of assembly, interacts with UBR1 and UBR2. Interacts with MCM10; this interaction regulates RECQL4 unwinding activity. Interacts with TOPBP1. It depends on Zn(2+) as a cofactor.

The protein localises to the cytoplasm. Its subcellular location is the nucleus. The catalysed reaction is Couples ATP hydrolysis with the unwinding of duplex DNA by translocating in the 3'-5' direction.. The enzyme catalyses ATP + H2O = ADP + phosphate + H(+). An ATP-dependent DNA helicase which unwinds dsDNA with a 3'-overhang in a 3'-5' direction. May play a role in development of the palate and the limbs. May modulate chromosome segregation. This is ATP-dependent DNA helicase Q4 (Recql4) from Mus musculus (Mouse).